The chain runs to 306 residues: Pantothenate kinase (306 aa).

91–98 lines the ATP pocket; the sequence is GSVAVGKS.

It belongs to the prokaryotic pantothenate kinase family.

Its subcellular location is the cytoplasm. It carries out the reaction (R)-pantothenate + ATP = (R)-4'-phosphopantothenate + ADP + H(+). It functions in the pathway cofactor biosynthesis; coenzyme A biosynthesis; CoA from (R)-pantothenate: step 1/5. The sequence is that of Pantothenate kinase from Streptococcus equi subsp. zooepidemicus (strain H70).